Reading from the N-terminus, the 496-residue chain is Solute carrier family 2, facilitated glucose transporter member 3 (496 aa).

Topologically, residues Met-1 to Leu-10 are cytoplasmic. The chain crosses the membrane as a helical span at residues Ile-11–Asn-32. The Extracellular segment spans residues Ala-33 to Ser-64. Asn-43 is a glycosylation site (N-linked (GlcNAc...) asparagine). A helical membrane pass occupies residues Leu-65–Val-85. The Cytoplasmic segment spans residues Asn-86 to Arg-90. Residues Arg-91–Cys-111 form a helical membrane-spanning segment. Topologically, residues Lys-112–Glu-118 are extracellular. The helical transmembrane segment at Met-119–Ile-142 threads the bilayer. The Cytoplasmic segment spans residues Gly-143–Ala-153. Residues Phe-154–Leu-174 form a helical membrane-spanning segment. Gln-159 serves as a coordination point for D-glucose. Residues Glu-175–Leu-183 lie on the Extracellular side of the membrane. The helical transmembrane segment at Trp-184 to Phe-204 threads the bilayer. The Cytoplasmic segment spans residues Cys-205–Pro-269. Thr-232 carries the phosphothreonine modification. The chain crosses the membrane as a helical span at residues Ile-270–Tyr-290. The interval Gln-277–Ser-279 is important for selectivity against fructose. D-glucose is bound by residues Gln-280 to Gln-281 and Asn-286. Topologically, residues Tyr-291–Pro-304 are extracellular. A helical transmembrane segment spans residues Ile-305–Leu-325. Residue Asn-315 participates in D-glucose binding. The Cytoplasmic portion of the chain corresponds to Val-326–Arg-331. Residues Arg-332 to Ser-352 form a helical membrane-spanning segment. Topologically, residues Leu-353–Ser-363 are extracellular. The chain crosses the membrane as a helical span at residues Phe-364–Val-389. Residues Glu-378 and Trp-386 each coordinate D-glucose. Topologically, residues Ala-390 to Pro-399 are cytoplasmic. The chain crosses the membrane as a helical span at residues Ala-400–Phe-420. The Extracellular segment spans residues Pro-421 to Ala-429. Residues Tyr-430–Val-450 form a helical membrane-spanning segment. The Cytoplasmic portion of the chain corresponds to Pro-451–Val-496. Phosphoserine occurs at positions 475 and 485. Thr-492 is subject to Phosphothreonine.

Belongs to the major facilitator superfamily. Sugar transporter (TC 2.A.1.1) family. Glucose transporter subfamily. Interacts with SMIM43; the interaction may promote SLC2A3-mediated glucose transport to meet the energy needs of mesendoderm differentiation.

It localises to the cell membrane. The protein resides in the perikaryon. Its subcellular location is the cell projection. The enzyme catalyses D-glucose(out) = D-glucose(in). It carries out the reaction D-galactose(in) = D-galactose(out). Its activity is regulated as follows. Deoxyglucose transport is inhibited by D-glucose, D-galactose and maltose. Galactose transport is inhibited by D-glucose and maltose. Facilitative glucose transporter. Can also mediate the uptake of various other monosaccharides across the cell membrane. Mediates the uptake of glucose, 2-deoxyglucose, galactose, mannose, xylose and fucose, and probably also dehydroascorbate. Does not mediate fructose transport. Required for mesendoderm differentiation. In Pongo abelii (Sumatran orangutan), this protein is Solute carrier family 2, facilitated glucose transporter member 3.